The following is a 290-amino-acid chain: Acetyl-coenzyme A carboxylase carboxyl transferase subunit beta (290 aa).

In terms of domain architecture, CoA carboxyltransferase N-terminal spans 27–290 (LWHKCPSCEA…FTHSPSPVSA (264 aa)). Zn(2+) is bound by residues C31, C34, C50, and C53. The C4-type zinc-finger motif lies at 31 to 53 (CPSCEAVLYRPELEKTLDVCPKC).

This sequence belongs to the AccD/PCCB family. As to quaternary structure, acetyl-CoA carboxylase is a heterohexamer composed of biotin carboxyl carrier protein (AccB), biotin carboxylase (AccC) and two subunits each of ACCase subunit alpha (AccA) and ACCase subunit beta (AccD). Zn(2+) serves as cofactor.

Its subcellular location is the cytoplasm. The enzyme catalyses N(6)-carboxybiotinyl-L-lysyl-[protein] + acetyl-CoA = N(6)-biotinyl-L-lysyl-[protein] + malonyl-CoA. It functions in the pathway lipid metabolism; malonyl-CoA biosynthesis; malonyl-CoA from acetyl-CoA: step 1/1. Component of the acetyl coenzyme A carboxylase (ACC) complex. Biotin carboxylase (BC) catalyzes the carboxylation of biotin on its carrier protein (BCCP) and then the CO(2) group is transferred by the transcarboxylase to acetyl-CoA to form malonyl-CoA. The sequence is that of Acetyl-coenzyme A carboxylase carboxyl transferase subunit beta from Pseudomonas aeruginosa (strain UCBPP-PA14).